The chain runs to 187 residues: Threonylcarbamoyl-AMP synthase (187 aa).

Residues T4–L187 form the YrdC-like domain.

The protein belongs to the SUA5 family. TsaC subfamily.

It localises to the cytoplasm. The enzyme catalyses L-threonine + hydrogencarbonate + ATP = L-threonylcarbamoyladenylate + diphosphate + H2O. Functionally, required for the formation of a threonylcarbamoyl group on adenosine at position 37 (t(6)A37) in tRNAs that read codons beginning with adenine. Catalyzes the conversion of L-threonine, HCO(3)(-)/CO(2) and ATP to give threonylcarbamoyl-AMP (TC-AMP) as the acyladenylate intermediate, with the release of diphosphate. The polypeptide is Threonylcarbamoyl-AMP synthase (Xylella fastidiosa (strain 9a5c)).